The following is a 328-amino-acid chain: Biotin synthase (328 aa).

The Radical SAM core domain maps to 42-267; that stretch reads YHVQLASLLS…LMPGSRVRLS (226 aa). Residues cysteine 57, cysteine 61, and cysteine 64 each contribute to the [4Fe-4S] cluster site. Cysteine 101, cysteine 133, cysteine 193, and arginine 265 together coordinate [2Fe-2S] cluster.

The protein belongs to the radical SAM superfamily. Biotin synthase family. As to quaternary structure, homodimer. [4Fe-4S] cluster serves as cofactor. [2Fe-2S] cluster is required as a cofactor.

It carries out the reaction (4R,5S)-dethiobiotin + (sulfur carrier)-SH + 2 reduced [2Fe-2S]-[ferredoxin] + 2 S-adenosyl-L-methionine = (sulfur carrier)-H + biotin + 2 5'-deoxyadenosine + 2 L-methionine + 2 oxidized [2Fe-2S]-[ferredoxin]. It participates in cofactor biosynthesis; biotin biosynthesis; biotin from 7,8-diaminononanoate: step 2/2. In terms of biological role, catalyzes the conversion of dethiobiotin (DTB) to biotin by the insertion of a sulfur atom into dethiobiotin via a radical-based mechanism. This chain is Biotin synthase, found in Synechococcus sp. (strain CC9311).